Here is a 496-residue protein sequence, read N- to C-terminus: L-arabinose isomerase (496 aa).

Residues Glu302, Glu329, His346, and His445 each contribute to the Mn(2+) site.

The protein belongs to the arabinose isomerase family. Mn(2+) serves as cofactor.

It catalyses the reaction beta-L-arabinopyranose = L-ribulose. It participates in carbohydrate degradation; L-arabinose degradation via L-ribulose; D-xylulose 5-phosphate from L-arabinose (bacterial route): step 1/3. Functionally, catalyzes the conversion of L-arabinose to L-ribulose. The polypeptide is L-arabinose isomerase (Thermotoga neapolitana (strain ATCC 49049 / DSM 4359 / NBRC 107923 / NS-E)).